Consider the following 161-residue polypeptide: uncharacterized protein (161 aa).

Disordered regions lie at residues 47 to 83 (KPAK…NNIN) and 104 to 137 (RRLQ…SKNY). The span at 50–64 (KRNIHGHNNHTRSSN) shows a compositional bias: basic residues. Low complexity-rich tracts occupy residues 73-83 (NINHNNNNNIN) and 115-130 (SSSS…TNDN).

This is an uncharacterized protein from Dictyostelium discoideum (Social amoeba).